Consider the following 167-residue polypeptide: Small ribosomal subunit protein uS5 (167 aa).

One can recognise an S5 DRBM domain in the interval 12-75 (LQEKLIAVNR…EKARRNMVTI (64 aa)).

This sequence belongs to the universal ribosomal protein uS5 family. Part of the 30S ribosomal subunit. Contacts proteins S4 and S8.

With S4 and S12 plays an important role in translational accuracy. Functionally, located at the back of the 30S subunit body where it stabilizes the conformation of the head with respect to the body. The sequence is that of Small ribosomal subunit protein uS5 from Vibrio vulnificus (strain CMCP6).